The sequence spans 389 residues: Alanine racemase (389 aa).

K48 acts as the Proton acceptor; specific for D-alanine in catalysis. An N6-(pyridoxal phosphate)lysine modification is found at K48. R144 provides a ligand contact to substrate. Catalysis depends on Y281, which acts as the Proton acceptor; specific for L-alanine. M329 is a substrate binding site.

The protein belongs to the alanine racemase family. Pyridoxal 5'-phosphate is required as a cofactor.

It catalyses the reaction L-alanine = D-alanine. The protein operates within amino-acid biosynthesis; D-alanine biosynthesis; D-alanine from L-alanine: step 1/1. In terms of biological role, catalyzes the interconversion of L-alanine and D-alanine. May also act on other amino acids. In Leptospira interrogans serogroup Icterohaemorrhagiae serovar Lai (strain 56601), this protein is Alanine racemase (alr).